The sequence spans 211 residues: N-(5'-phosphoribosyl)anthranilate isomerase (211 aa).

It belongs to the TrpF family.

It catalyses the reaction N-(5-phospho-beta-D-ribosyl)anthranilate = 1-(2-carboxyphenylamino)-1-deoxy-D-ribulose 5-phosphate. The protein operates within amino-acid biosynthesis; L-tryptophan biosynthesis; L-tryptophan from chorismate: step 3/5. The sequence is that of N-(5'-phosphoribosyl)anthranilate isomerase from Zymomonas mobilis subsp. pomaceae (strain ATCC 29192 / DSM 22645 / JCM 10191 / CCUG 17912 / NBRC 13757 / NCIMB 11200 / NRRL B-4491 / Barker I).